Here is a 409-residue protein sequence, read N- to C-terminus: Nucleoprotein (409 aa).

4 disordered regions span residues 1-32 (MASG…SSGN), 46-69 (SPPL…QQHG), 120-193 (GADT…SGAE), and 238-259 (VDQV…DKMN). Over residues 15 to 31 (PVIKLGGPKPPKVGSSG) the composition is skewed to low complexity. Residues 29 to 160 (SSGNASWFQA…GNFRWDFIPL (132 aa)) are RNA-binding. The 126-residue stretch at 31-156 (GNASWFQAIK…GGPDGNFRWD (126 aa)) folds into the CoV N NTD domain. Residues 162–179 (RGRSGKSTAASSAASSRA) are compositionally biased toward low complexity. Composition is skewed to basic and acidic residues over residues 180–192 (PSRE…RSGA) and 247–259 (KGKE…DKMN). Ser-190 is modified (phosphoserine; by host). The CoV N CTD domain maps to 215–331 (TKAKADEMAH…QCVDGVGTRP (117 aa)). Residues 226–333 (RYCKRTIPPG…VDGVGTRPKD (108 aa)) are dimerization. A disulfide bond links Cys-320 and Cys-323. The interval 327 to 409 (VGTRPKDDEP…GDSALGENEL (83 aa)) is disordered. Over residues 341–354 (RSSSRPATRTSSPA) the composition is skewed to low complexity. Residues 358-367 (PRPKKEKKTK) show a composition bias toward basic residues. Residues 368–384 (KQDDEVDKALTSDEERN) are compositionally biased toward basic and acidic residues. At Thr-378 the chain carries Phosphothreonine; by host. Ser-379 bears the Phosphoserine; by host mark.

Belongs to the gammacoronavirus nucleocapsid protein family. As to quaternary structure, homooligomer. Both monomeric and oligomeric forms interact with RNA. Interacts with protein M. Interacts with NSP3; this interaction serves to tether the genome to the newly translated replicase-transcriptase complex at a very early stage of infection. Post-translationally, ADP-ribosylated. The ADP-ribosylation is retained in the virion during infection. In terms of processing, phosphorylated on serine and threonine residues.

The protein resides in the virion. Its subcellular location is the host endoplasmic reticulum-Golgi intermediate compartment. It is found in the host Golgi apparatus. Packages the positive strand viral genome RNA into a helical ribonucleocapsid (RNP) and plays a fundamental role during virion assembly through its interactions with the viral genome and membrane protein M. Plays an important role in enhancing the efficiency of subgenomic viral RNA transcription as well as viral replication. The polypeptide is Nucleoprotein (Gallus gallus (Chicken)).